Reading from the N-terminus, the 260-residue chain is Flagellar basal-body rod protein FlgG (260 aa).

Belongs to the flagella basal body rod proteins family. In terms of assembly, the basal body constitutes a major portion of the flagellar organelle and consists of four rings (L,P,S, and M) mounted on a central rod. The rod consists of about 26 subunits of FlgG in the distal portion, and FlgB, FlgC and FlgF are thought to build up the proximal portion of the rod with about 6 subunits each.

Its subcellular location is the bacterial flagellum basal body. The chain is Flagellar basal-body rod protein FlgG (flgG) from Escherichia coli O157:H7.